We begin with the raw amino-acid sequence, 482 residues long: Cysteine--tRNA ligase (482 aa).

Cys29 contributes to the Zn(2+) binding site. Residues 31–41 (PTVYDFAHIGN) carry the 'HIGH' region motif. Zn(2+)-binding residues include Cys224, His249, and Glu253. The short motif at 282–286 (KMSKS) is the 'KMSKS' region element. Lys285 is an ATP binding site.

The protein belongs to the class-I aminoacyl-tRNA synthetase family. In terms of assembly, monomer. Zn(2+) serves as cofactor.

The protein resides in the cytoplasm. It catalyses the reaction tRNA(Cys) + L-cysteine + ATP = L-cysteinyl-tRNA(Cys) + AMP + diphosphate. This is Cysteine--tRNA ligase from Nitrobacter hamburgensis (strain DSM 10229 / NCIMB 13809 / X14).